The primary structure comprises 310 residues: Protein OS-9 homolog (310 aa).

A signal peptide spans 1–40 (MFSSSMFPHLILPAIGSSKVRTMVLPFAFVGFFIFPICLA). Asn60, Asn97, and Asn104 each carry an N-linked (GlcNAc...) asparagine glycan. The MRH domain maps to 129–255 (NVFLIENRGY…TIHVPGLCSL (127 aa)). 2 residues coordinate a mannooligosaccharide derivative: Trp139 and Gln151. A glycan (N-linked (GlcNAc...) asparagine) is linked at Asn204. 2 disulfide bridges follow: Cys208–Cys241 and Cys223–Cys253. Positions 209, 215, 237, and 243 each coordinate a mannooligosaccharide derivative. Composition is skewed to basic and acidic residues over residues 282–292 (VDHKDSQHVVD) and 301–310 (EVKEVETQSS). A disordered region spans residues 282-310 (VDHKDSQHVVDEVAQTSPPEVKEVETQSS).

It belongs to the OS-9 family. Interacts with missfolded ER lumenal proteins.

The protein localises to the endoplasmic reticulum membrane. Functionally, lectin involved in the quality control of the secretory pathway. As a member of the endoplasmic reticulum-associated degradation lumenal (ERAD-L) surveillance system, targets misfolded endoplasmic reticulum lumenal glycoproteins for degradation. The chain is Protein OS-9 homolog (yos9) from Schizosaccharomyces pombe (strain 972 / ATCC 24843) (Fission yeast).